A 500-amino-acid chain; its full sequence is Probable cytosol aminopeptidase (500 aa).

Mn(2+) is bound by residues K268 and D273. K280 is an active-site residue. Residues D291, D350, and E352 each coordinate Mn(2+). R354 is a catalytic residue.

Belongs to the peptidase M17 family. It depends on Mn(2+) as a cofactor.

Its subcellular location is the cytoplasm. The enzyme catalyses Release of an N-terminal amino acid, Xaa-|-Yaa-, in which Xaa is preferably Leu, but may be other amino acids including Pro although not Arg or Lys, and Yaa may be Pro. Amino acid amides and methyl esters are also readily hydrolyzed, but rates on arylamides are exceedingly low.. It catalyses the reaction Release of an N-terminal amino acid, preferentially leucine, but not glutamic or aspartic acids.. Presumably involved in the processing and regular turnover of intracellular proteins. Catalyzes the removal of unsubstituted N-terminal amino acids from various peptides. This is Probable cytosol aminopeptidase from Baumannia cicadellinicola subsp. Homalodisca coagulata.